The following is a 500-amino-acid chain: Maturase K (500 aa).

This sequence belongs to the intron maturase 2 family. MatK subfamily.

The protein localises to the plastid. It is found in the chloroplast. In terms of biological role, usually encoded in the trnK tRNA gene intron. Probably assists in splicing its own and other chloroplast group II introns. This chain is Maturase K, found in Brasenia schreberi (Water shield).